An 86-amino-acid chain; its full sequence is Small ribosomal subunit protein bS20 (86 aa).

This sequence belongs to the bacterial ribosomal protein bS20 family.

Functionally, binds directly to 16S ribosomal RNA. This chain is Small ribosomal subunit protein bS20, found in Aliarcobacter butzleri (strain RM4018) (Arcobacter butzleri).